A 289-amino-acid chain; its full sequence is MAGAKEIKTKIASVQSTQKITKAMEMVATSKMRKTQDRMAASRPYSETIRNVISHVSKASIGYKHPFLVEREVKKIGILVISTDRGMCGGLNVNLFKTTLNQIKNWKEQNISTDLGLIGSKGISFFRSFGFNIKGQLSGLGDTPALEELIGVANTMFDAYRNGEIDAIYIAYNKFVNTMSQKPVVQQLVPLPESKDDHLNERQQTWDYLYEPEPKALLDSLLVRYLESQIYQAVVDNVASEQAARMVAMKAATDNAGNLINDLRLVYNKARQASITNELNEIVAGAAAI.

It belongs to the ATPase gamma chain family. F-type ATPases have 2 components, CF(1) - the catalytic core - and CF(0) - the membrane proton channel. CF(1) has five subunits: alpha(3), beta(3), gamma(1), delta(1), epsilon(1). CF(0) has three main subunits: a, b and c.

The protein localises to the cell inner membrane. Its function is as follows. Produces ATP from ADP in the presence of a proton gradient across the membrane. The gamma chain is believed to be important in regulating ATPase activity and the flow of protons through the CF(0) complex. In Haemophilus influenzae (strain PittEE), this protein is ATP synthase gamma chain.